Reading from the N-terminus, the 399-residue chain is Succinate--CoA ligase [ADP-forming] subunit beta (399 aa).

One can recognise an ATP-grasp domain in the interval 9–254; that stretch reads KAVLAEFGVA…ESEEDPKEIE (246 aa). ATP is bound by residues Lys46, 53–55, Glu109, Ala112, and Glu117; that span reads GRG. Asn209 and Asp223 together coordinate Mg(2+). Residues Asn274 and 331-333 contribute to the substrate site; that span reads GIM.

This sequence belongs to the succinate/malate CoA ligase beta subunit family. Heterotetramer of two alpha and two beta subunits. Mg(2+) serves as cofactor.

It carries out the reaction succinate + ATP + CoA = succinyl-CoA + ADP + phosphate. The enzyme catalyses GTP + succinate + CoA = succinyl-CoA + GDP + phosphate. It participates in carbohydrate metabolism; tricarboxylic acid cycle; succinate from succinyl-CoA (ligase route): step 1/1. Succinyl-CoA synthetase functions in the citric acid cycle (TCA), coupling the hydrolysis of succinyl-CoA to the synthesis of either ATP or GTP and thus represents the only step of substrate-level phosphorylation in the TCA. The beta subunit provides nucleotide specificity of the enzyme and binds the substrate succinate, while the binding sites for coenzyme A and phosphate are found in the alpha subunit. The polypeptide is Succinate--CoA ligase [ADP-forming] subunit beta (Phenylobacterium zucineum (strain HLK1)).